A 441-amino-acid chain; its full sequence is N-acetyl-S-(2-succino)cysteine monooxygenase (441 aa).

Residues aspartate 59, threonine 96, histidine 146, tyrosine 150, serine 220, and serine 221 each contribute to the FMN site.

This sequence belongs to the NtaA/SnaA/DszA monooxygenase family. As to quaternary structure, homodimer. FMN serves as cofactor.

It carries out the reaction N-acetyl-S-(2-succino)-L-cysteine + NADH + O2 + H(+) = N-acetyl-L-cysteine + oxaloacetate + NAD(+) + H2O. Its pathway is amino-acid biosynthesis; L-cysteine biosynthesis. In terms of biological role, catalyzes the oxidative cleavage of the C-S bond of N-acetyl-S-(2-succino)cysteine, forming oxaloacetate and N-acetylcysteine (NAC). Is involved in a S-(2-succino)cysteine (2SC) degradation pathway that allows B.subtilis to grow on 2SC as a sole sulfur source, via its metabolization to cysteine. Shows almost no activity on S-succinylglutathione and 2SC. This Bacillus subtilis (strain 168) protein is N-acetyl-S-(2-succino)cysteine monooxygenase.